The primary structure comprises 103 residues: Cell division suppressor protein YneA (103 aa).

The LysM domain maps to 36 to 87 (VKIKVQDGDTLWSLADHVAEKKHINKEDFIEWVTENNHLQTADIKPGDELIL).

The protein belongs to the YneA family.

The protein localises to the cytoplasm. Its function is as follows. Inhibits cell division during the SOS response. Affects a later stage of the cell division protein assembly, after the assembly of the Z ring, by probably suppressing recruitment of FtsL and/or DivIC to the division machinery. This Bacillus velezensis (strain DSM 23117 / BGSC 10A6 / LMG 26770 / FZB42) (Bacillus amyloliquefaciens subsp. plantarum) protein is Cell division suppressor protein YneA.